A 103-amino-acid chain; its full sequence is Small ribosomal subunit protein uS10 (103 aa).

It belongs to the universal ribosomal protein uS10 family. In terms of assembly, part of the 30S ribosomal subunit.

In terms of biological role, involved in the binding of tRNA to the ribosomes. The polypeptide is Small ribosomal subunit protein uS10 (Marinomonas sp. (strain MWYL1)).